A 395-amino-acid chain; its full sequence is 8-amino-3,8-dideoxy-alpha-D-manno-octulosonate transaminase (395 aa).

Lys-186 is modified (N6-(pyridoxal phosphate)lysine).

It belongs to the DegT/DnrJ/EryC1 family. The cofactor is pyridoxal 5'-phosphate.

It catalyses the reaction 8-amino-3,8-dideoxy-alpha-D-manno-octulosonate + 2-oxoglutarate = 3,8-dideoxy-8-oxo-alpha-D-manno-octulosonate + L-glutamate. The protein operates within bacterial outer membrane biogenesis; lipopolysaccharide biosynthesis. In terms of biological role, catalyzes the second (last) step of the biosynthesis of Kdo8N (8-amino-3,8-dideoxy-D-manno-octulosonate) from Kdo (3-deoxy-D-manno-octulosonate). This chain is 8-amino-3,8-dideoxy-alpha-D-manno-octulosonate transaminase, found in Shewanella oneidensis (strain ATCC 700550 / JCM 31522 / CIP 106686 / LMG 19005 / NCIMB 14063 / MR-1).